The chain runs to 449 residues: Naphthalene 1,2-dioxygenase system, large oxygenase component (449 aa).

The region spanning 39-137 (WLFLTHDSLI…LDKKCMGLKE (99 aa)) is the Rieske domain. 4 residues coordinate [2Fe-2S] cluster: Cys81, His83, Cys101, and His104. Fe cation is bound by residues His208, His213, and Asp362.

This sequence belongs to the bacterial ring-hydroxylating dioxygenase alpha subunit family. As to quaternary structure, the naphthalene dioxygenase (NDO) multicomponent enzyme system is composed of an electron transfer component and a dioxygenase component (iron sulfur protein (ISP)). The electron transfer component is composed of a ferredoxin reductase (NdoR) and a ferredoxin (NdoA), and the dioxygenase component is formed of a heterohexamer (trimer of heterodimers) of three large alpha subunits (NdoB) and three small beta subunits (NdoC). [2Fe-2S] cluster serves as cofactor. Fe(2+) is required as a cofactor.

It catalyses the reaction naphthalene + NADH + O2 + H(+) = (1R,2S)-1,2-dihydronaphthalene-1,2-diol + NAD(+). The protein operates within aromatic compound metabolism; naphthalene degradation. Functionally, component of the naphthalene dioxygenase (NDO) multicomponent enzyme system which catalyzes the incorporation of both atoms of molecular oxygen into naphthalene to form cis-(1R,2S)-dihydroxy-1,2-dihydronaphthalene. The alpha subunit has a catalytic role in the holoenzyme. The chain is Naphthalene 1,2-dioxygenase system, large oxygenase component from Pseudomonas aeruginosa.